A 489-amino-acid polypeptide reads, in one-letter code: GTPase Der (489 aa).

2 EngA-type G domains span residues 3–166 (PVVA…AEAM) and 200–373 (IKLA…ESAT). GTP is bound by residues 9–16 (GRPNVGKS), 56–60 (DTGGI), 118–121 (NKVD), 206–213 (GKPNVGKS), 253–257 (DTAGV), and 318–321 (NKWD). Residues 374–458 (RRVSTSMLTR…PIQVRFQEGG (85 aa)) form the KH-like domain.

Belongs to the TRAFAC class TrmE-Era-EngA-EngB-Septin-like GTPase superfamily. EngA (Der) GTPase family. As to quaternary structure, associates with the 50S ribosomal subunit.

GTPase that plays an essential role in the late steps of ribosome biogenesis. The polypeptide is GTPase Der (Shewanella loihica (strain ATCC BAA-1088 / PV-4)).